A 619-amino-acid polypeptide reads, in one-letter code: 1-deoxy-D-xylulose-5-phosphate synthase (619 aa).

Residues His80 and 121–123 (GHS) contribute to the thiamine diphosphate site. Position 152 (Asp152) interacts with Mg(2+). Residues 153–154 (GA), Asn181, Tyr288, and Glu370 contribute to the thiamine diphosphate site. Residue Asn181 participates in Mg(2+) binding.

It belongs to the transketolase family. DXPS subfamily. Homodimer. It depends on Mg(2+) as a cofactor. Requires thiamine diphosphate as cofactor.

The catalysed reaction is D-glyceraldehyde 3-phosphate + pyruvate + H(+) = 1-deoxy-D-xylulose 5-phosphate + CO2. The protein operates within metabolic intermediate biosynthesis; 1-deoxy-D-xylulose 5-phosphate biosynthesis; 1-deoxy-D-xylulose 5-phosphate from D-glyceraldehyde 3-phosphate and pyruvate: step 1/1. Catalyzes the acyloin condensation reaction between C atoms 2 and 3 of pyruvate and glyceraldehyde 3-phosphate to yield 1-deoxy-D-xylulose-5-phosphate (DXP). The chain is 1-deoxy-D-xylulose-5-phosphate synthase from Yersinia pseudotuberculosis serotype O:3 (strain YPIII).